A 166-amino-acid polypeptide reads, in one-letter code: uncharacterized protein (166 aa).

The HTH asnC-type domain maps to 3–65 (LTEKETEILE…IDWRKVDGHE (63 aa)). The segment at residues 22-41 (LETIAKMAGIPVNEVKTIID) is a DNA-binding region (H-T-H motif).

This is an uncharacterized protein from Bacillus subtilis (strain 168).